The primary structure comprises 337 residues: MSSSPVKRQRMESALDQLKQFTTVVADTGDFHAIDEYKPQDATTNPSLILAAAQMPAYQELVEEAIAYGRKLGGSQEDQIKNAIDKLFVLFGAEILKKIPGRVSTEVDARLSFDKDAMVARARRLIELYKEAGISKDRILIKLSSTWEGIQAGKELEEQHGIHCNMTLLFSFAQAVACAEAGVTLISPFVGRILDWHVANTDKKSYEPLEDPGVKSVTKIYNYYKKFSYKTIVMGASFRNTGEIKALAGCDFLTISPKLLGELLQDNAKLVPVLSAKAAQASDLEKIHLDEKSFRWLHNEDQMAVEKLSDGIRKFAADAVKLERMLTERMFNAENGK.

The short motif at 1–10 (MSSSPVKRQR) is the Nuclear localization signal element. Lys-115 carries the post-translational modification N6-acetyllysine. Catalysis depends on Lys-142, which acts as the Schiff-base intermediate with substrate. Lys-219 carries the N6-acetyllysine modification. Phosphoserine is present on residues Ser-237 and Ser-256. 3 positions are modified to N6-acetyllysine: Lys-269, Lys-286, and Lys-321.

Belongs to the transaldolase family. Type 1 subfamily. Homodimer. Heterodimer with isoform 2. Interacts with KPNA1 and KPNA4.

It is found in the nucleus. The protein resides in the cytoplasm. It carries out the reaction D-sedoheptulose 7-phosphate + D-glyceraldehyde 3-phosphate = D-erythrose 4-phosphate + beta-D-fructose 6-phosphate. It functions in the pathway carbohydrate degradation; pentose phosphate pathway; D-glyceraldehyde 3-phosphate and beta-D-fructose 6-phosphate from D-ribose 5-phosphate and D-xylulose 5-phosphate (non-oxidative stage): step 2/3. Its function is as follows. Catalyzes the rate-limiting step of the non-oxidative phase in the pentose phosphate pathway. Catalyzes the reversible conversion of sedheptulose-7-phosphate and D-glyceraldehyde 3-phosphate into erythrose-4-phosphate and beta-D-fructose 6-phosphate. Not only acts as a pentose phosphate pathway enzyme, but also affects other metabolite pathways by altering its subcellular localization between the nucleus and the cytoplasm. The sequence is that of Transaldolase from Homo sapiens (Human).